The primary structure comprises 1158 residues: Transient receptor potential cation channel subfamily M member 5 (1158 aa).

At 1 to 729 (MQTTQSSCPG…LTRWRKFWGA (729 aa)) the chain is on the cytoplasmic side. The residue at position 129 (serine 129) is a Phosphoserine; by PKC. Positions 341, 350, 353, and 354 each coordinate Ca(2+). The disordered stretch occupies residues 488–507 (GRRMEERGPPKRPAGQKWLP). The stretch at 552–572 (KIIKEMSHLEKEAEVARTMRE) forms a coiled coil. Residues 730–754 (PVTVFLGNVVMYFAFLFLFTYVLLV) traverse the membrane as a helical segment. Topologically, residues 755–764 (DFRPPPQGPS) are extracellular. The helical transmembrane segment at 765–784 (GSEVTLYFWVFTLVLEEIRQ) threads the bilayer. Ca(2+) is bound by residues glutamate 781 and glutamine 784. Residues 785-805 (GFFTDEDTHLVKKFTLYVEDN) are Cytoplasmic-facing. A helical membrane pass occupies residues 806–824 (WNKCDMVAIFLFIVGVTCR). Ca(2+) contacts are provided by asparagine 807 and aspartate 810. Over 825 to 831 (MVPSVFE) the chain is Extracellular. A helical membrane pass occupies residues 832 to 854 (AGRTVLAIDFMVFTLRLIHIFAI). The Cytoplasmic portion of the chain corresponds to 855-863 (HKQLGPKII). Residues 864-893 (IVERMMKDVFFFLFFLSVWLVAYGVTTQAL) form a helical membrane-spanning segment. Residues 894 to 902 (LHPHDGRLE) are Extracellular-facing. Positions 903–938 (WIFRRVLYRPYLQIFGQIPLDEIDEARVNCSLHPLL) form an intramembrane region, pore-forming. A Selectivity filter motif is present at residues 917–919 (FGQ). The Extracellular segment spans residues 939 to 950 (LESSASCPNLYA). Residues 951–985 (NWLVILLLVTFLLVTNVLLMNLLIAMFSYTFQVVQ) traverse the membrane as a helical segment. At 986 to 1158 (GNADMFWKFQ…LESGLPPSDT (173 aa)) the chain is on the cytoplasmic side. Glutamate 1002 provides a ligand contact to Ca(2+). A compositionally biased stretch (polar residues) spans 1127–1141 (TYSSSQNCGCRSQPA). Positions 1127-1158 (TYSSSQNCGCRSQPASARDREYLESGLPPSDT) are disordered.

Belongs to the transient receptor (TC 1.A.4) family. LTrpC subfamily. TRPM5 sub-subfamily. As to quaternary structure, homotetramer. Post-translationally, multiple phosphorylation sites regulate the Gq/ TRPM5 modulation axis, with the Ser-129 playing a substantial role in this positive modulation. Strongly expressed in liver, heart, testis, brain and kidney. Detected in fetal liver, kidney, spleen, brain, heart and lung, and in adult skin, eyes, spleen, stomach, small intestine, colon, lung, bladder, pancreas and thymus. Biallelically expressed at all stages and tissues examined. Also expressed in subsets of taste receptor cells of the tongue, in olfactory sensory neurons of the main olfactory epithelium and in the vomeronasal organ.

Its subcellular location is the cell membrane. It carries out the reaction Na(+)(in) = Na(+)(out). It catalyses the reaction K(+)(in) = K(+)(out). Ca(2+)-activated cation channel. Displays voltage dependence modulation. Regulated by PI(4,5)P2 levels. PI(4,5)P 2 reverses the Ca(2+) -induced desensitization of channels. Inhibited by flufenamic acid with an IC(50) of 24.5 uM and spermine with an IC(50) of 37 uM. Is a highly temperature-sensitive, heat activated channel showing a steep increase of inward currents at temperatures between 15 and 35 degrees Celsius. Heat activation is due to a shift of the voltage-dependent activation curve to negative potentials. The channel is blocked by extracellular acidification. Functionally, monovalent cation-selective ion channel activated by intracellular Ca(2+) in a voltage- and temperature-dependent manner. Mediates the transport of Na(+), K(+) and Cs(+) ions equally well. Activated directly by increase in intracellular Ca(2+), but is impermeable to it. The activation mechanism of TRPM5 involves a multistep process. TRPM5 activation involves ligand binding (i.e., tastant molecule, glucose stimulation) to Gq/G-protein coupled receptors (GPCR) and leads to the breakdown of phosphatidylinositol bisphosphate (PIP2) into diacylglycerol (DAG) and inositol trisphosphate (IP3), IP3 binds to its receptors in the endoplasmic reticulum and cause Ca(2+) release. Simultaneously with the intracellular Ca(2+) release, DAG activates the protein kinase C (PKC), which phosphorylates the TRPM5 channel. This phosphorylation combined with the bound Ca(2+), leads to a robust inward current allowing the entry of sodium ions (Na+) into the cell. This ion influx depolarizes the cell membrane, generating action potentials that propagate TRPM5 signals. Is a key player in sensing sweet, umami and bitter stimuli. May also be involved in sensing semiochemicals. Involved in insulin secretion by pancreatic beta cells. The protein is Transient receptor potential cation channel subfamily M member 5 of Mus musculus (Mouse).